We begin with the raw amino-acid sequence, 431 residues long: Indole diterpene prenyltransferase nodD1 (431 aa).

85–86 lines the L-tryptophan pocket; sequence FI. Arg-107, Lys-194, Arg-268, Lys-270, Tyr-272, and Tyr-353 together coordinate substrate.

It belongs to the tryptophan dimethylallyltransferase family.

It participates in secondary metabolite biosynthesis. Indole diterpene prenyltransferase; part of the gene cluster that mediates the biosynthesis of the indole diterpenes nodulisporic acids (NA). Nodulisporic acid A (NAA) and its chemically modified derivatives are of particular significance because of their highly potent insecticidal activity against blood-feeding arthropods and lack of observable adverse effects on mammals, in particular the tremogenicity associated with the paspaline-derived IDTs is not observed. The geranylgeranyl diphosphate (GGPP) synthase ggs1, localized outside of the cluster, is proposed to catalyze the first step in nodulisporic acid biosynthesis via conversion of farnesyl pyrophosphate and isopentyl pyrophosphate into geranylgeranyl pyrophosphate (GGPP). Condensation of indole-3-glycerol phosphate with GGPP by the prenyl transferase nodC then forms 3-geranylgeranylindole (3-GGI). Epoxidation by the FAD-dependent monooxygenase nodM leads to a single-epoxidized-GGI that is substrate of the terpene cyclase nodB for cyclization to yield emindole SB. The terminal methyl carbon, C28, of emindole SB is then oxidized by the cytochrome P450 monooxygenase nodW to produce nodulisporic acid F (NAF), the pentacyclic core of NAA. NAF is converted to nodulisporic acid E (NAE) via prenylation. This step is probably performed by one of the indole diterpene prenyltransferases nodD1 or nodD2. Several oxidation steps performed by the FAD-linked oxidoreductase nodO and one of the cytochrome P450 monooxygenase nodR, nodX or nodZ further convert NAE to nodulisporic acid D (NAD). NAD is substrate of cytochrome P450 monooxygenase nodJ to produce the precursor of nodulisporic acid C (NAC), converted to NAC by one of the indole diterpene prenyltransferases nodD1 or nodD2. The FAD-dependent monooxygenase nodY2 then oxidizes NAC to nodulisporic acid B (NAB). Finally NAB is converted to NAA by one of the cytochrome P450 monooxygenases nodR, nodX or nodZ. The protein is Indole diterpene prenyltransferase nodD1 of Hypoxylon pulicicidum.